The following is a 124-amino-acid chain: Small ribosomal subunit protein uS12 (124 aa).

A 3-methylthioaspartic acid modification is found at Asp89. The interval Asp103–Asp124 is disordered. Positions Gly113 to Asp124 are enriched in basic residues.

Belongs to the universal ribosomal protein uS12 family. As to quaternary structure, part of the 30S ribosomal subunit. Contacts proteins S8 and S17. May interact with IF1 in the 30S initiation complex.

Functionally, with S4 and S5 plays an important role in translational accuracy. Interacts with and stabilizes bases of the 16S rRNA that are involved in tRNA selection in the A site and with the mRNA backbone. Located at the interface of the 30S and 50S subunits, it traverses the body of the 30S subunit contacting proteins on the other side and probably holding the rRNA structure together. The combined cluster of proteins S8, S12 and S17 appears to hold together the shoulder and platform of the 30S subunit. In Acaryochloris marina (strain MBIC 11017), this protein is Small ribosomal subunit protein uS12.